Reading from the N-terminus, the 271-residue chain is Solute carrier family 66 member 2 (271 aa).

Helical transmembrane passes span 7-27, 49-69, and 72-92; these read GWLL…AMVF, FSTH…LFWF, and HFES…LLML. One can recognise a PQ-loop 1 domain in the interval 14–80; the sequence is HQLVSWVAAG…RHFESPLLWQ (67 aa). Serine 110 is subject to Phosphoserine. 3 helical membrane passes run 143 to 163, 168 to 188, and 232 to 252; these read FADY…ITYL, ALFV…LGVP, and VCGL…YAFA. The region spanning 149–215 is the PQ-loop 2 domain; that stretch reads CVLAFTGVAG…MVLMWTSGDT (67 aa).

It is found in the membrane. This chain is Solute carrier family 66 member 2 (Slc66a2), found in Rattus norvegicus (Rat).